A 427-amino-acid chain; its full sequence is Adenylosuccinate synthetase (427 aa).

Residues 12 to 18 (GDEGKGK) and 40 to 42 (GHT) contribute to the GTP site. Asp-13 functions as the Proton acceptor in the catalytic mechanism. Mg(2+) contacts are provided by Asp-13 and Gly-40. IMP is bound by residues 13–16 (DEGK), 38–41 (NAGH), Thr-126, Arg-140, Gln-221, Thr-236, and Arg-299. Catalysis depends on His-41, which acts as the Proton donor. 295 to 301 (STTKRPR) contributes to the substrate binding site. GTP contacts are provided by residues Arg-301, 327 to 329 (KLD), and 409 to 411 (SVG).

This sequence belongs to the adenylosuccinate synthetase family. As to quaternary structure, homodimer. Mg(2+) is required as a cofactor.

Its subcellular location is the cytoplasm. The catalysed reaction is IMP + L-aspartate + GTP = N(6)-(1,2-dicarboxyethyl)-AMP + GDP + phosphate + 2 H(+). It participates in purine metabolism; AMP biosynthesis via de novo pathway; AMP from IMP: step 1/2. Its function is as follows. Plays an important role in the de novo pathway of purine nucleotide biosynthesis. Catalyzes the first committed step in the biosynthesis of AMP from IMP. The polypeptide is Adenylosuccinate synthetase (Borrelia recurrentis (strain A1)).